The sequence spans 349 residues: Thioredoxin reductase, mitochondrial (349 aa).

The transit peptide at 1 to 30 directs the protein to the mitochondrion; that stretch reads MLLVRNSTLGRLSSLRGFFRNINESNIFYR. FAD is bound by residues 41-44, 70-71, Gln-75, Asn-84, Val-117, Cys-175, Asp-318, and 325-327; these read SGPA, IA, and RQA. Cys-172 and Cys-175 are joined by a disulfide.

Belongs to the class-II pyridine nucleotide-disulfide oxidoreductase family. In terms of assembly, homodimer. FAD serves as cofactor.

The protein resides in the mitochondrion. It carries out the reaction [thioredoxin]-dithiol + NADP(+) = [thioredoxin]-disulfide + NADPH + H(+). This Kluyveromyces lactis (strain ATCC 8585 / CBS 2359 / DSM 70799 / NBRC 1267 / NRRL Y-1140 / WM37) (Yeast) protein is Thioredoxin reductase, mitochondrial (TRR1).